The chain runs to 453 residues: Probable multidrug resistance protein NorM (453 aa).

The next 12 membrane-spanning stretches (helical) occupy residues 13 to 35, 50 to 72, 93 to 115, 125 to 147, 160 to 182, 192 to 214, 238 to 260, 275 to 297, 318 to 340, 350 to 372, 385 to 407, and 417 to 439; these read LLFF…FVDI, TLGS…MLAA, YLFL…SWLL, LEIT…IFNV, IAMY…LIYG, IGAG…IYFL, FYIG…VIAI, IMLN…VTVR, IALI…GSFI, IIIA…CQAA, SVFY…ILAL, and IIGF…FIIL.

Belongs to the multi antimicrobial extrusion (MATE) (TC 2.A.66.1) family.

The protein localises to the cell inner membrane. Functionally, multidrug efflux pump. The polypeptide is Probable multidrug resistance protein NorM (norM) (Photorhabdus laumondii subsp. laumondii (strain DSM 15139 / CIP 105565 / TT01) (Photorhabdus luminescens subsp. laumondii)).